A 138-amino-acid polypeptide reads, in one-letter code: Thyrotropin subunit beta (138 aa).

Positions 1 to 20 are cleaved as a signal peptide; sequence MNAVVLFSVLFALACGQVSS. 6 disulfides stabilise this stretch: Cys-22/Cys-72, Cys-36/Cys-87, Cys-39/Cys-125, Cys-47/Cys-103, Cys-51/Cys-105, and Cys-108/Cys-115. The N-linked (GlcNAc...) asparagine glycan is linked to Asn-43. A propeptide spanning residues 133–138 is cleaved from the precursor; it reads LGGFSG.

Belongs to the glycoprotein hormones subunit beta family. Heterodimer of a common alpha chain and a unique beta chain which confers biological specificity to thyrotropin, lutropin, follitropin and gonadotropin.

The protein resides in the secreted. In terms of biological role, indispensable for the control of thyroid structure and metabolism. In Rattus norvegicus (Rat), this protein is Thyrotropin subunit beta (Tshb).